Consider the following 954-residue polypeptide: MTTPTEFQFTDYQPYDFANRRHIGPSPAEMDEMLKTVGYDSLDGLIAATVPASIRQSAPLVWGKAMSEREALDKLRETANKNKALTSLIGQGYYGTITPPVIQRNILENPAWYTAYTPYQPEISQGRLEALLNFQTMICDLTGLDVANASLLDEATAAAEAMAMAERVAKSKAKAFFVDSNCHPQTIAVIQTRAEPLGWGVVVGNPFTDLNPGEVFGALFQYPGTHGHVSDFTPLINALHNAQAIAAVAADPLALLLLKSPGEMGADIAIGSSQRFGVPVGYGGPHAAYMAVKDAIKRSMPGRLVGVSVDSRGNRAYRLSLQTREQHIRREKATSNICTAQVLLAVMASMYAVFHGPQGLKAIAQQVHQKTVLLAKGLEKLGFTIEPETFFDTITLEVGHMQGLILRAAVAEGVNLRKVGTTKIGISLDERTRPATLEAVWRAFGGNFAVGDFTPDYRLPTSLLRTSQYLTHPIFHMNRAESEMTRYIRRLSDRDLALDRAMIPLGSCTMKLNATAEMLPITWPEFSDIHPFAPADQALGYQEMIDDLSEKLCAVTGYDAISMQPNSGAQGEYAGLLTIRNYHLAKGDTHRTVCLIPTSAHGTNPASAQMAGMLVVPVKALDNGDVDLADFRTKAEQHSTNLSCCMITYPSTHGVFEETVREICEITHAHGGQVYLDGANMNAMVGIARPGDIGSDVSHLNLHKTFCIPHGGGGPGMGPIGVKAHLTPYLPGHVETDGRPGAVSAAPYGSPSILPISWSYCLMMGGEGLTQATKVAILNANYIAARLTGAYDVLYTSASGRVAHECIIDTRPLADSAGVTVDDVAKRLIDCGFHAPTMSWPVAGTLMIEPTESETKAELDRFCTAMLAIREEARAIEDGRMDKTNNPLKNAPHTVEDLVGEWDRPYSRDQACYPPGAFRVDKYWSSVNRVDNVYGDRNLVCTCPPMSEYAEAAE.

Position 704 is an N6-(pyridoxal phosphate)lysine (Lys704).

This sequence belongs to the GcvP family. The glycine cleavage system is composed of four proteins: P, T, L and H. Requires pyridoxal 5'-phosphate as cofactor.

The catalysed reaction is N(6)-[(R)-lipoyl]-L-lysyl-[glycine-cleavage complex H protein] + glycine + H(+) = N(6)-[(R)-S(8)-aminomethyldihydrolipoyl]-L-lysyl-[glycine-cleavage complex H protein] + CO2. The glycine cleavage system catalyzes the degradation of glycine. The P protein binds the alpha-amino group of glycine through its pyridoxal phosphate cofactor; CO(2) is released and the remaining methylamine moiety is then transferred to the lipoamide cofactor of the H protein. The chain is Glycine dehydrogenase (decarboxylating) from Allorhizobium ampelinum (strain ATCC BAA-846 / DSM 112012 / S4) (Agrobacterium vitis (strain S4)).